The chain runs to 362 residues: GTP cyclohydrolase FolE2 (362 aa).

This sequence belongs to the GTP cyclohydrolase IV family.

It carries out the reaction GTP + H2O = 7,8-dihydroneopterin 3'-triphosphate + formate + H(+). The protein operates within cofactor biosynthesis; 7,8-dihydroneopterin triphosphate biosynthesis; 7,8-dihydroneopterin triphosphate from GTP: step 1/1. In terms of biological role, converts GTP to 7,8-dihydroneopterin triphosphate. The sequence is that of GTP cyclohydrolase FolE2 from Jannaschia sp. (strain CCS1).